The chain runs to 166 residues: Orofacial cleft 1 candidate gene 1 protein homolog (166 aa).

A disordered region spans residues 1–22 (MDKEKFQQKAVKQTKQKKSTSA).

In Mus musculus (Mouse), this protein is Orofacial cleft 1 candidate gene 1 protein homolog (Ofcc1).